Reading from the N-terminus, the 202-residue chain is UPF0637 protein Exig_2520 (202 aa).

This sequence belongs to the UPF0637 family.

This is UPF0637 protein Exig_2520 from Exiguobacterium sibiricum (strain DSM 17290 / CCUG 55495 / CIP 109462 / JCM 13490 / 255-15).